The primary structure comprises 322 residues: 5'-AMP-activated protein kinase subunit gamma (322 aa).

CBS domains lie at 37–97 (VSYR…NPDK), 118–181 (VDQL…CRET), 194–253 (ITQD…YNDL), and 262–322 (MRRS…LGSN). Residues Ile-42, Arg-146, 166-169 (TQYR), and Thr-195 contribute to the ADP site. AMP contacts are provided by residues Thr-195, Lys-200, and 221–222 (SS). Residues Thr-195, Lys-200, and 221–222 (SS) contribute to the ATP site. Residues 221–222 (SS), 291–293 (RVH), and 309–312 (TLSD) contribute to the ADP site. 309–312 (TLSD) is an AMP binding site. 309–312 (TLSD) is an ATP binding site.

The protein belongs to the 5'-AMP-activated protein kinase gamma subunit family. As to quaternary structure, AMPK is a heterotrimer of an alpha catalytic subunit (SNF1), a beta (SIP1, SIP2 or GAL83) and a gamma non-catalytic subunits (SNF4). Note=Interaction between SNF1 and SNF4 is inhibited by high levels of glucose.

It is found in the nucleus. Its subcellular location is the cytoplasm. Functionally, adenine nucleotides-binding subunit gamma of AMP-activated protein kinase (AMPK), an energy sensor protein kinase that plays a key role in regulating cellular energy metabolism. In response to reduction of intracellular ATP levels, AMPK activates energy-producing pathways and inhibits energy-consuming processes: inhibits protein, carbohydrate and lipid biosynthesis, as well as cell growth and proliferation. AMPK acts via direct phosphorylation of metabolic enzymes, and by longer-term effects via phosphorylation of transcription regulators. Gamma non-catalytic subunit mediates binding to AMP, ADP and ATP, leading to activate or inhibit AMPK: AMP-binding results in allosteric activation of alpha catalytic subunit (SNF1) both by inducing phosphorylation and preventing dephosphorylation of catalytic subunits. The polypeptide is 5'-AMP-activated protein kinase subunit gamma (SNF4) (Saccharomyces cerevisiae (strain ATCC 204508 / S288c) (Baker's yeast)).